We begin with the raw amino-acid sequence, 447 residues long: Interferon-induced protein 44-like (447 aa).

The TLDc domain maps to 1–159 (MKVTARLTWI…PVECEIFRVD (159 aa)).

The protein belongs to the IFI44 family. As to quaternary structure, HA-28 antigen forms a complex with Kb MHC in BALB.B donor cells. Interacts with FKBP5; this interaction modulates IKBKB and IKBKE kinase activities. In terms of tissue distribution, expressed on cells of the hematopoietic lineage. Detected in transformed cell lines of the macrophage and B-cell lineage. Expressed in spleen and bone marrow.

The protein resides in the cytoplasm. In terms of biological role, type I interferon-stimulated gene (ISG) that plays a critical role in antiviral and antibacterial activity. During bacterial infection, promotes macrophage differentiation and facilitates inflammatory cytokine secretion. Plays a role in the control of respiratory syncycial virus/RSV infection, reducing the ability of the virus to replicate. Acts as a feedback regulator of IFN responses by negatively regulating IKBKB kinase activity through interaction with FKBP5. Functionally, precursor of the histocompatibility antigen HA-28 in BALB.B mice. More generally, minor histocompatibility antigens refer to immunogenic peptide which, when complexed with MHC, can generate an immune response after recognition by specific T-cells. The peptides are derived from polymorphic intracellular proteins, which are cleaved by normal pathways of antigen processing. The binding of these peptides to MHC molecules and its expression on the cell surface can stimulate T-cell responses and thereby trigger graft rejection or graft-versus-host disease (GVHD). More specifically, HA-28 minor antigen is transcribed in the BALB.B donor but not in host C57BL/6 cells. HA-28 is presented to the donor BALB.B cell surface by Kb MHC. This complex HA-28/Kb MHC elicits cytotoxic T-cell response in C57BL/6 mice immunized with BALB.B spleen cells. It induces C57BL/6 mice cells recognition and lysis by CD8 T-cell from BALB.B mice. The polypeptide is Interferon-induced protein 44-like (Ifi44l) (Mus musculus (Mouse)).